The sequence spans 89 residues: Gallinacin-13 (89 aa).

The N-terminal stretch at 1–23 (MRILQLLFAIVVILLLQDAPARG) is a signal peptide. 3 cysteine pairs are disulfide-bonded: cysteine 30/cysteine 58, cysteine 37/cysteine 51, and cysteine 41/cysteine 59. Positions 66 to 89 (PFSNPKHSVLHTAEQDPSPSLGGT) are disordered.

Belongs to the beta-defensin family. Expressed in the liver, gall bladder, kidney, small intestine, spleen, testis, ovary and male and female reproductive tracts. Not detected in the ovarian stroma and the theca and granulosa layers of the ovarian follicle.

The protein resides in the secreted. Its subcellular location is the cytoplasmic granule. Has bactericidal activity. Potent activity against E.coli, L.monocytogenes, S.typhimurium and S.pyogenes but mot against S.aureus. In terms of biological role, has bactericidal activity. This Gallus gallus (Chicken) protein is Gallinacin-13 (GAL13).